The following is a 344-amino-acid chain: Outer membrane protein B (344 aa).

Residues 1–30 form the signal peptide; that stretch reads MNSKMLKHLRLATLSFSMFFGIVSSPAVYA.

Belongs to the chlamydial OMP family.

It is found in the cell outer membrane. The polypeptide is Outer membrane protein B (ompB) (Chlamydia pneumoniae (Chlamydophila pneumoniae)).